The chain runs to 548 residues: Chaperonin GroEL (548 aa).

ATP is bound by residues Thr30 to Pro33, Lys51, Asp87 to Thr91, Gly415, Asn479 to Ala481, and Asp495.

The protein belongs to the chaperonin (HSP60) family. In terms of assembly, forms a cylinder of 14 subunits composed of two heptameric rings stacked back-to-back. Interacts with the co-chaperonin GroES.

It localises to the cytoplasm. The enzyme catalyses ATP + H2O + a folded polypeptide = ADP + phosphate + an unfolded polypeptide.. In terms of biological role, together with its co-chaperonin GroES, plays an essential role in assisting protein folding. The GroEL-GroES system forms a nano-cage that allows encapsulation of the non-native substrate proteins and provides a physical environment optimized to promote and accelerate protein folding. The polypeptide is Chaperonin GroEL (Klebsiella aerogenes (strain ATCC 13048 / DSM 30053 / CCUG 1429 / JCM 1235 / KCTC 2190 / NBRC 13534 / NCIMB 10102 / NCTC 10006 / CDC 819-56) (Enterobacter aerogenes)).